We begin with the raw amino-acid sequence, 153 residues long: Regulator of sigma D (153 aa).

It belongs to the Rsd/AlgQ family. As to quaternary structure, interacts with RpoD.

Its subcellular location is the cytoplasm. Functionally, binds RpoD and negatively regulates RpoD-mediated transcription activation by preventing the interaction between the primary sigma factor RpoD with the catalytic core of the RNA polymerase and with promoter DNA. May be involved in replacement of the RNA polymerase sigma subunit from RpoD to RpoS during the transition from exponential growth to the stationary phase. The protein is Regulator of sigma D of Pectobacterium carotovorum subsp. carotovorum (strain PC1).